We begin with the raw amino-acid sequence, 428 residues long: GTPase Obg (428 aa).

Residues 1–158 (MFVDQVKIYV…RDVILELKVL (158 aa)) enclose the Obg domain. Residues 159–329 (ADVGLVGFPS…LLFEVANLIE (171 aa)) enclose the OBG-type G domain. GTP-binding positions include 165–172 (GFPSVGKS), 190–194 (FTTIV), 212–215 (DLPG), 282–285 (NKMD), and 310–312 (SAV). Residues Ser172 and Thr192 each coordinate Mg(2+). The OCT domain occupies 350–428 (KFDTEGVKFE…ILEYEFEFID (79 aa)).

It belongs to the TRAFAC class OBG-HflX-like GTPase superfamily. OBG GTPase family. As to quaternary structure, monomer. Requires Mg(2+) as cofactor.

It is found in the cytoplasm. In terms of biological role, an essential GTPase which binds GTP, GDP and possibly (p)ppGpp with moderate affinity, with high nucleotide exchange rates and a fairly low GTP hydrolysis rate. Plays a role in control of the cell cycle, stress response, ribosome biogenesis and in those bacteria that undergo differentiation, in morphogenesis control. In Bacillus cereus (strain B4264), this protein is GTPase Obg.